The primary structure comprises 496 residues: Isocitrate dehydrogenase [NADP] (496 aa).

Leucine 88 and threonine 90 together coordinate NADP(+). Positions 98, 100, 104, 114, and 137 each coordinate D-threo-isocitrate. NADP(+) is bound by residues asparagine 193, glutamine 229, and lysine 232. Residue aspartate 248 participates in Mg(2+) binding. Positions 277, 281, 282, 283, 285, 286, and 293 each coordinate NADP(+).

The protein belongs to the isocitrate and isopropylmalate dehydrogenases family. As to quaternary structure, homodimer. Mg(2+) serves as cofactor. The cofactor is Mn(2+).

The enzyme catalyses D-threo-isocitrate + NADP(+) = 2-oxoglutarate + CO2 + NADPH. Its function is as follows. Catalyzes the oxidative decarboxylation of isocitrate to 2-oxoglutarate and carbon dioxide with the concomitant reduction of NADP(+). This Thermus thermophilus (strain ATCC 27634 / DSM 579 / HB8) protein is Isocitrate dehydrogenase [NADP] (icd).